Here is a 118-residue protein sequence, read N- to C-terminus: UPF0102 protein STH1475 (118 aa).

It belongs to the UPF0102 family.

This is UPF0102 protein STH1475 from Symbiobacterium thermophilum (strain DSM 24528 / JCM 14929 / IAM 14863 / T).